The chain runs to 604 residues: MKEKTPTPMKNIRNFSIIAHIDHGKSTLADCLIAECNAISNREMKSQVMDTMDIEKERGITIKAQSVRLNYTFKGEDYVLNLIDTPGHVDFSYEVSRSLCSCEGALLVVDATQGVEAQTIANTYIALDNNLEILPVINKIDLPNANVLEVKQDIEDTIGIDWFNANEVSAKAKLGIKDLLEKIITTIPAPSGDPNNPLKALIYDSWFDNYLGALALVRIMDGSINTEQEILVMGTGKKHGVLGLYYPNPLKKIPTKSLECGEIGIVSLGLKSVTDIAVGDTLTDAENPTSKPIEGFMPAKPFVFAGLYPIETDRFEDLREALLKLQLNDCALNFEPESSVALGFGFRVGFLGLLHMEVIKERLEREFSLNLIATAPTVVYEVHLTDNSIKYVQNPSELPPENHIACIKEPFVRATIITPSEFLGNLMQLLNNKRGIQEKMEYLNQSRVMLTYSLPSNEIVMDFYDKLKSCTKGYASFDYEPIENREANLVKLDVRVAGDVVDALSIIIDKNKAYEKGRALVETMKELIPRQLFEVAIQASVGNKIIARETIKSVGKNVTAKCYGGDITRKRKLLEKQKEGKKRMKAIGKVELPQEAFLAILKID.

Positions 10–191 constitute a tr-type G domain; that stretch reads KNIRNFSIIA…KIITTIPAPS (182 aa). Residues 22–27 and 138–141 each bind GTP; these read DHGKST and NKID.

This sequence belongs to the TRAFAC class translation factor GTPase superfamily. Classic translation factor GTPase family. LepA subfamily.

Its subcellular location is the cell inner membrane. The catalysed reaction is GTP + H2O = GDP + phosphate + H(+). Functionally, required for accurate and efficient protein synthesis under certain stress conditions. May act as a fidelity factor of the translation reaction, by catalyzing a one-codon backward translocation of tRNAs on improperly translocated ribosomes. Back-translocation proceeds from a post-translocation (POST) complex to a pre-translocation (PRE) complex, thus giving elongation factor G a second chance to translocate the tRNAs correctly. Binds to ribosomes in a GTP-dependent manner. The sequence is that of Elongation factor 4 from Helicobacter pylori (strain J99 / ATCC 700824) (Campylobacter pylori J99).